A 1651-amino-acid polypeptide reads, in one-letter code: MSSFAALNLSTNENADESKDHSRELQVEESSKIFQLALIQLKAKRFDDAKETFDRLFEIDVIKPNKWGLYEYSSPTLDSLRYLAYRNRGILHYQYAKENFKQMESDDVVEHILKTLECLLESLQHGEADNTVTHLLLKIFWSFNSTKLSRTILEYELTRSPEEIRLLSSLSAMFKDQKRVFKQYSQLLKKLHVTSLPQNIPTAVEAVLNCIETCDVEEGQIEPLLKDIKAMKTEDDEILKELDGSNLNLNELSWEELGVSLRSLVPKTKVVNILGRKSDTYSDLEAPIEYVSFTTDEFMEKLSDSSNESPGHSPEHFEDAVSVMPETNNIEVSVEREPSAKRQDSTDRPAQRSSKRFKEREKVQEPDVEQQVEFHTYIINEINQSLHVSGIEKDISIEELDPNNVAKRQELCMSDFYDCLTSWTNKHTEFLKQGQENFSVKGSTDDFTQLTMLLRSSMFSGDVEPTDSLSEIEAEDVRRFIRDVNDKKLHFHAVRFLFIKELLKLREDGTCLVTDYFWSPALYEVVEFFSMAIEVNLYQMIEPSTDESTVSIAVSIFEIMTNMMGNICNDLANKKAQGQKYNELESQRNKLQRKIVRWYEMLLSKPLSTKLKFRFQWSHFSCLQCTTDVTNSTLITTIEDIENSLKEFPDFGTVAYSNYNNISSLSLKTVQSQFSKIKMLRRFTIVDIENEDEDNTHKDYIEHLYCILNQIPCEGTDFQSLLSFVNTSPFLMKLKLWKLLLNYFASRKDQLRFQNCFFSSIKFLLARLSSEEYQIQSQLQRQQTLLSTLTHIGEFSKRFFQVLCDNWDMSLKNPSRDQLQVLVSIFRLLYPLVFYETLTEKNASLKSFFKKAVKSSITIQDIFLTVASLMILCHKFITLEKENAKEEFTGSIIDLISALHMLAGKFEFCDRFDGNFLKVQEKLLCEFSNDSAFTHLKRELWCRYHISIGLDNPEDQHQTHAQPMVKANAIMLSNYFIKFQYQDRNILVLSNNRSNFKQFFETVMELIGDIDYEANHVLSRNEYFFNQYFTAPITLKTIRDAYAGEFEIEFTSPNDDLQSGVDGGLFYVSAVHALNQYKARKKSMQARPSELDAIISTLTTDILYNTKRFESWYLLGKCYSFVVEDDLTWTSDKLASRDKKQATAFAEKKAILCYLMALSLYLSTFKETTSEQMKNDNKIVFRNLLESLGKEMLQAYVKPMSSMSYTWKLKPVLVLKADGSLENLPISYKPSISETNILRCILMILAKADTLYNKDEERNWMNPFYISKVHFKTDRKLFKESGICLLQDSCRLALLQSSVSGSDNILEAHYALVSYCYKCFKDRTFSLAEAISHLREDNGFFGLPEEEWQVEDDKSFFNLIIRLLKYILSKDKQKWQHRPIYRIAQIKYTEFEDTDGAMKEMNKLLALKSVNKNVVNIWKPENELPGKHFVYAYQYVLFYMDLLNEKHDFMAIGGMVKKLRRFGSGMINSQDAINKAVELFVNGAKVKLSLNEKEHGELLMQRIPFPEFVELSEELFNAFKKGDYQSDVLDVFLLAYNLKKGTNSIQFDGVCITIYFKYFYCPFVENKKQSTPYPAPIIEGISGPQPENSPSQQLPQSQSQPQLPRSPSPNTANNKEKTAKTPVKNPTSIRKRVSKRDVFDRVVKLIEKRLS.

The segment covering 1-13 (MSSFAALNLSTNE) has biased composition (polar residues). The tract at residues 1–22 (MSSFAALNLSTNENADESKDHS) is disordered. Residues 30 to 63 (SSKIFQLALIQLKAKRFDDAKETFDRLFEIDVIK) form a TPR repeat. Positions 333 to 365 (SVEREPSAKRQDSTDRPAQRSSKRFKEREKVQE) are enriched in basic and acidic residues. Disordered stretches follow at residues 333–368 (SVER…EPDV) and 1575–1632 (APII…IRKR). Low complexity predominate over residues 1589 to 1609 (SPSQQLPQSQSQPQLPRSPSP).

It belongs to the HIR3 family.

Its subcellular location is the nucleus. In terms of biological role, has a role in a nucleosome assembly pathway that is required for the integrity of heterochromatin and proper chromosome segregation. This Kluyveromyces lactis (strain ATCC 8585 / CBS 2359 / DSM 70799 / NBRC 1267 / NRRL Y-1140 / WM37) (Yeast) protein is Histone transcription regulator 3 homolog (HIR3).